A 241-amino-acid chain; its full sequence is Glutathione S-transferase omega-1 (241 aa).

Ser-2 is subject to N-acetylserine. In terms of domain architecture, GST N-terminal spans Gly-22–Lys-101. Cys-32 acts as the Nucleophile in catalysis. At Lys-57 the chain carries N6-acetyllysine. Residues Lys-59, Val-72, and Glu-85–Ser-86 each bind glutathione. The region spanning Asp-106 to Leu-228 is the GST C-terminal domain. Ser-129 is modified (phosphoserine). N6-acetyllysine is present on residues Lys-143, Lys-148, and Lys-152.

Belongs to the GST superfamily. Omega family. As to quaternary structure, homodimer.

The protein resides in the cytoplasm. It is found in the cytosol. The enzyme catalyses RX + glutathione = an S-substituted glutathione + a halide anion + H(+). It catalyses the reaction L-dehydroascorbate + 2 glutathione = glutathione disulfide + L-ascorbate. It carries out the reaction methylarsonate + 2 glutathione + H(+) = methylarsonous acid + glutathione disulfide + H2O. In terms of biological role, exhibits glutathione-dependent thiol transferase and dehydroascorbate reductase activities. Has S-(phenacyl)glutathione reductase activity. Also has glutathione S-transferase activity. Participates in the biotransformation of inorganic arsenic and reduces monomethylarsonic acid (MMA) and dimethylarsonic acid. This is Glutathione S-transferase omega-1 (Gsto1) from Rattus norvegicus (Rat).